A 145-amino-acid chain; its full sequence is Immune protein Tsi4 (145 aa).

The next 2 helical transmembrane spans lie at 9 to 29 (IGGL…LLAG) and 109 to 129 (ALWG…IVGF).

The protein localises to the membrane. Functionally, immunity protein that plays a role in preventing early activation of toxin Tse4. This chain is Immune protein Tsi4, found in Pseudomonas aeruginosa (strain ATCC 15692 / DSM 22644 / CIP 104116 / JCM 14847 / LMG 12228 / 1C / PRS 101 / PAO1).